Reading from the N-terminus, the 489-residue chain is Protein K15 (489 aa).

Positions 1 to 26 (MKTLIFFWNLWLWALLVCFWCITLVC) are cleaved as a signal peptide. The next 11 membrane-spanning stretches (helical) occupy residues 29-49 (TNSIDTMASLLVMCILFVSAI), 63-83 (WPSSWHLGIIACIVLKLWNLS), 89-109 (TYACLITTAILSLVTAFLTLI), 121-141 (HGILFTSTFAVLMTNMLVHMS), 148-168 (WIFFPISFTLSLPFLYAFATV), 175-195 (LVSSVSFICAGLVMGYPVSCC), 200-220 (CTATAAGLSLSSIYLGFTGII), 237-257 (FLLLQGGVLTTQTLTTELLAI), 264-284 (IKGHEILLLVCLIFLWCLYVW), 296-316 (MLHLIAAWSHTGGCVQLVMLL), and 324-344 (ILTMIICISTLFSTLQGLLVF).

As to quaternary structure, interacts with host LYN; this interaction modulates B-cells signaling. Interacts with host ITSN2.

The protein resides in the host cell membrane. It localises to the host Golgi apparatus. The protein localises to the host trans-Golgi network. In terms of biological role, plays a crucial role for reactivation of the virus from latency, early viral gene expression and virus production. Modulates host signaling pathways including activation of MAP kinases c-JUN-N-terminal kinase (JNK), ERK2, and NF-kappa-B resulting in the activation of AP-1 and NFAT-dependent gene expression in B-lymphocytes. When expressed in epithelial cells, induces the expression of several inflammatory and angiogenic genes. Also interferes with B-lymphocytes signaling through interaction with host LYN kinase. This is Protein K15 (K15) from Human herpesvirus 8 type P (isolate GK18) (HHV-8).